Consider the following 100-residue polypeptide: Small ribosomal subunit protein bS6 (100 aa).

It belongs to the bacterial ribosomal protein bS6 family.

Binds together with bS18 to 16S ribosomal RNA. This chain is Small ribosomal subunit protein bS6, found in Tropheryma whipplei (strain TW08/27) (Whipple's bacillus).